The chain runs to 226 residues: Ribose-5-phosphate isomerase A (226 aa).

Substrate is bound by residues 33 to 36 (TGST), 86 to 89 (DGAD), and 99 to 102 (KGGG). Catalysis depends on Glu108, which acts as the Proton acceptor. A substrate-binding site is contributed by Lys126.

It belongs to the ribose 5-phosphate isomerase family. Homodimer.

The enzyme catalyses aldehydo-D-ribose 5-phosphate = D-ribulose 5-phosphate. It participates in carbohydrate degradation; pentose phosphate pathway; D-ribose 5-phosphate from D-ribulose 5-phosphate (non-oxidative stage): step 1/1. Its function is as follows. Catalyzes the reversible conversion of ribose-5-phosphate to ribulose 5-phosphate. In Bordetella pertussis (strain Tohama I / ATCC BAA-589 / NCTC 13251), this protein is Ribose-5-phosphate isomerase A.